The following is a 497-amino-acid chain: Bifunctional protein GlmU (497 aa).

Residues M1–R241 are pyrophosphorylase. UDP-N-acetyl-alpha-D-glucosamine is bound by residues L14–G17, K28, Q81, G86–T87, Y112–D114, G151, E166, N181, and N239. D114 lines the Mg(2+) pocket. Position 239 (N239) interacts with Mg(2+). Positions I242–A262 are linker. The segment at G263–A497 is N-acetyltransferase. Positions 344 and 362 each coordinate UDP-N-acetyl-alpha-D-glucosamine. H374 (proton acceptor) is an active-site residue. Positions 377 and 388 each coordinate UDP-N-acetyl-alpha-D-glucosamine. Residues N397–Y398, S416, and A434 contribute to the acetyl-CoA site.

It in the N-terminal section; belongs to the N-acetylglucosamine-1-phosphate uridyltransferase family. In the C-terminal section; belongs to the transferase hexapeptide repeat family. As to quaternary structure, homotrimer. Requires Mg(2+) as cofactor.

It is found in the cytoplasm. It carries out the reaction alpha-D-glucosamine 1-phosphate + acetyl-CoA = N-acetyl-alpha-D-glucosamine 1-phosphate + CoA + H(+). It catalyses the reaction N-acetyl-alpha-D-glucosamine 1-phosphate + UTP + H(+) = UDP-N-acetyl-alpha-D-glucosamine + diphosphate. Its pathway is nucleotide-sugar biosynthesis; UDP-N-acetyl-alpha-D-glucosamine biosynthesis; N-acetyl-alpha-D-glucosamine 1-phosphate from alpha-D-glucosamine 6-phosphate (route II): step 2/2. The protein operates within nucleotide-sugar biosynthesis; UDP-N-acetyl-alpha-D-glucosamine biosynthesis; UDP-N-acetyl-alpha-D-glucosamine from N-acetyl-alpha-D-glucosamine 1-phosphate: step 1/1. It functions in the pathway bacterial outer membrane biogenesis; LPS lipid A biosynthesis. Functionally, catalyzes the last two sequential reactions in the de novo biosynthetic pathway for UDP-N-acetylglucosamine (UDP-GlcNAc). The C-terminal domain catalyzes the transfer of acetyl group from acetyl coenzyme A to glucosamine-1-phosphate (GlcN-1-P) to produce N-acetylglucosamine-1-phosphate (GlcNAc-1-P), which is converted into UDP-GlcNAc by the transfer of uridine 5-monophosphate (from uridine 5-triphosphate), a reaction catalyzed by the N-terminal domain. This is Bifunctional protein GlmU from Paenarthrobacter aurescens (strain TC1).